Reading from the N-terminus, the 321-residue chain is AA9 family lytic polysaccharide monooxygenase A (321 aa).

The first 21 residues, 1–21 (MFRAQSFLPVLALVLRVAAHG), serve as a signal peptide directing secretion. H20 serves as a coordination point for Cu(2+). A disulfide bridge connects residues C71 and C197. Residue N72 is glycosylated (N-linked (GlcNAc...) asparagine). H105 contacts Cu(2+). N157 carries an N-linked (GlcNAc...) asparagine glycan. 2 residues coordinate O2: H183 and Q192. Cu(2+) is bound at residue Y194. Positions 278-306 (SSSAAATQSSSAAPSSSAIGTSTASSAAA) are disordered. S293 is lipidated: GPI-anchor amidated serine. The propeptide at 294-321 (SAIGTSTASSAAASGTAIVDANTCMNSA) is removed in mature form.

This sequence belongs to the polysaccharide monooxygenase AA9 family. Cu(2+) serves as cofactor.

It is found in the cell membrane. It carries out the reaction [(1-&gt;4)-beta-D-glucosyl]n+m + reduced acceptor + O2 = 4-dehydro-beta-D-glucosyl-[(1-&gt;4)-beta-D-glucosyl]n-1 + [(1-&gt;4)-beta-D-glucosyl]m + acceptor + H2O.. Its function is as follows. Lytic polysaccharide monooxygenase (LPMO) that depolymerizes crystalline and amorphous polysaccharides via the oxidation of scissile alpha- or beta-(1-4)-glycosidic bonds, yielding C1 or C4 oxidation products. Catalysis by LPMOs requires the reduction of the active-site copper from Cu(II) to Cu(I) by a reducing agent and H(2)O(2) or O(2) as a cosubstrate. Has broad specificity, cleaving at any position along the beta-glucan backbone of xyloglucan, regardless of substitutions. Shows minor activity on glucomannan. This Gloeophyllum trabeum (strain ATCC 11539 / FP-39264 / Madison 617) (Brown rot fungus) protein is AA9 family lytic polysaccharide monooxygenase A.